A 92-amino-acid chain; its full sequence is Small ribosomal subunit protein uS19c (92 aa).

This sequence belongs to the universal ribosomal protein uS19 family.

The protein resides in the plastid. It localises to the chloroplast. Functionally, protein S19 forms a complex with S13 that binds strongly to the 16S ribosomal RNA. The polypeptide is Small ribosomal subunit protein uS19c (Pyropia yezoensis (Susabi-nori)).